The following is a 297-amino-acid chain: Phosphoribosylaminoimidazole-succinocarboxamide synthase (297 aa).

Belongs to the SAICAR synthetase family.

It carries out the reaction 5-amino-1-(5-phospho-D-ribosyl)imidazole-4-carboxylate + L-aspartate + ATP = (2S)-2-[5-amino-1-(5-phospho-beta-D-ribosyl)imidazole-4-carboxamido]succinate + ADP + phosphate + 2 H(+). The protein operates within purine metabolism; IMP biosynthesis via de novo pathway; 5-amino-1-(5-phospho-D-ribosyl)imidazole-4-carboxamide from 5-amino-1-(5-phospho-D-ribosyl)imidazole-4-carboxylate: step 1/2. This chain is Phosphoribosylaminoimidazole-succinocarboxamide synthase, found in Mycobacterium sp. (strain JLS).